Reading from the N-terminus, the 396-residue chain is 1-deoxy-D-xylulose 5-phosphate reductoisomerase (396 aa).

8 residues coordinate NADPH: Thr10, Gly11, Ser12, Ile13, Gly36, Lys37, Asn38, and Asn124. Lys125 provides a ligand contact to 1-deoxy-D-xylulose 5-phosphate. Glu126 is an NADPH binding site. Residue Asp150 coordinates Mn(2+). Positions 151, 152, 186, and 209 each coordinate 1-deoxy-D-xylulose 5-phosphate. Glu152 provides a ligand contact to Mn(2+). An NADPH-binding site is contributed by Gly215. 4 residues coordinate 1-deoxy-D-xylulose 5-phosphate: Ser222, Asn227, Lys228, and Glu231. Glu231 provides a ligand contact to Mn(2+).

Belongs to the DXR family. Mg(2+) is required as a cofactor. Mn(2+) serves as cofactor.

The catalysed reaction is 2-C-methyl-D-erythritol 4-phosphate + NADP(+) = 1-deoxy-D-xylulose 5-phosphate + NADPH + H(+). It participates in isoprenoid biosynthesis; isopentenyl diphosphate biosynthesis via DXP pathway; isopentenyl diphosphate from 1-deoxy-D-xylulose 5-phosphate: step 1/6. Functionally, catalyzes the NADPH-dependent rearrangement and reduction of 1-deoxy-D-xylulose-5-phosphate (DXP) to 2-C-methyl-D-erythritol 4-phosphate (MEP). This chain is 1-deoxy-D-xylulose 5-phosphate reductoisomerase, found in Haemophilus ducreyi (strain 35000HP / ATCC 700724).